The primary structure comprises 511 residues: IWS1-like protein (511 aa).

The segment at Met1–Arg200 is disordered. Low complexity-rich tracts occupy residues Ala11–Pro30 and Ala55–Lys86. A compositionally biased stretch (acidic residues) spans Asp94–Glu103. Basic and acidic residues predominate over residues His134–Thr143. A compositionally biased stretch (acidic residues) spans Leu166–Gln179. Positions Ser294–Leu374 constitute a TFIIS N-terminal domain. The interval Ser382 to Lys454 is disordered. Composition is skewed to basic and acidic residues over residues Arg383–Pro395 and Asp414–Asp425.

The protein belongs to the IWS1 family.

It localises to the nucleus. The sequence is that of IWS1-like protein from Caenorhabditis elegans.